The chain runs to 411 residues: Peptidyl-prolyl cis-trans isomerase (411 aa).

Position 2 is an N-acetylserine (Ser2). 2 disordered regions span residues Ile54 to Pro127 and Asn160 to Lys302. The span at Phe61–Glu87 shows a compositional bias: acidic residues. Residues Ser80 and Ser81 each carry the phosphoserine modification. Thr89 carries the phosphothreonine modification. 2 stretches are compositionally biased toward acidic residues: residues Glu103 to Gln118 and Glu173 to Lys242. Tyr184 bears the Phosphotyrosine; by CK2 mark. Phosphoserine; by CK2 is present on Ser186. Residues Lys251–His260 are compositionally biased toward basic residues. The Nuclear localization signal motif lies at Lys256–Lys271. The span at Glu261 to Lys296 shows a compositional bias: basic and acidic residues. Residues Gly324 to Asn411 enclose the PPIase FKBP-type domain.

It belongs to the FKBP-type PPIase family. FKBP3/4 subfamily. In terms of assembly, interacts with NOP53. Phosphorylated at tyrosine and dephosphorylated by the phosphotyrosine-specific phosphoprotein phosphatase PTP1.

The protein localises to the nucleus. The protein resides in the nucleolus. It catalyses the reaction [protein]-peptidylproline (omega=180) = [protein]-peptidylproline (omega=0). Its activity is regulated as follows. Inhibited by both FK506 and rapamycin. In terms of biological role, proline isomerase that belongs to an abundant class of enzymes that catalyze the cis-trans isomerization of X-Pro peptide bonds and can accelerate the refolding of proline-containing polypeptides. Specifically binds nuclear localization sequences. May be involved in the assembly or folding of ribosomal proteins. The chain is Peptidyl-prolyl cis-trans isomerase from Saccharomyces cerevisiae (strain ATCC 204508 / S288c) (Baker's yeast).